Reading from the N-terminus, the 354-residue chain is Histidinol-phosphate aminotransferase (354 aa).

Lys210 is subject to N6-(pyridoxal phosphate)lysine.

This sequence belongs to the class-II pyridoxal-phosphate-dependent aminotransferase family. Histidinol-phosphate aminotransferase subfamily. Homodimer. Pyridoxal 5'-phosphate is required as a cofactor.

It catalyses the reaction L-histidinol phosphate + 2-oxoglutarate = 3-(imidazol-4-yl)-2-oxopropyl phosphate + L-glutamate. It functions in the pathway amino-acid biosynthesis; L-histidine biosynthesis; L-histidine from 5-phospho-alpha-D-ribose 1-diphosphate: step 7/9. This is Histidinol-phosphate aminotransferase from Clostridium botulinum (strain 657 / Type Ba4).